The following is a 470-amino-acid chain: 3-isopropylmalate dehydratase large subunit (470 aa).

Over residues 294 to 307 (PDQNTGISGSTPNP) the composition is skewed to polar residues. The disordered stretch occupies residues 294–313 (PDQNTGISGSTPNPSDAADD). [4Fe-4S] cluster is bound by residues cysteine 347, cysteine 407, and cysteine 410.

Belongs to the aconitase/IPM isomerase family. LeuC type 1 subfamily. Heterodimer of LeuC and LeuD. [4Fe-4S] cluster is required as a cofactor.

The enzyme catalyses (2R,3S)-3-isopropylmalate = (2S)-2-isopropylmalate. Its pathway is amino-acid biosynthesis; L-leucine biosynthesis; L-leucine from 3-methyl-2-oxobutanoate: step 2/4. Catalyzes the isomerization between 2-isopropylmalate and 3-isopropylmalate, via the formation of 2-isopropylmaleate. This chain is 3-isopropylmalate dehydratase large subunit, found in Akkermansia muciniphila (strain ATCC BAA-835 / DSM 22959 / JCM 33894 / BCRC 81048 / CCUG 64013 / CIP 107961 / Muc).